The primary structure comprises 146 residues: Large ribosomal subunit protein uL15 (146 aa).

The segment covering 1-13 (MKLHELKAAEGSR) has biased composition (basic and acidic residues). A disordered region spans residues 1–56 (MKLHELKAAEGSRRVRNRVGRGAATGNGKTSGRGQKGQKARSGGKLRPGFEGGQLP). Residues 23 to 35 (AATGNGKTSGRGQ) show a composition bias toward gly residues.

Belongs to the universal ribosomal protein uL15 family. Part of the 50S ribosomal subunit.

In terms of biological role, binds to the 23S rRNA. The protein is Large ribosomal subunit protein uL15 of Staphylococcus epidermidis (strain ATCC 35984 / DSM 28319 / BCRC 17069 / CCUG 31568 / BM 3577 / RP62A).